The primary structure comprises 208 residues: Small ribosomal subunit protein uS4 (208 aa).

Residues 97–160 enclose the S4 RNA-binding domain; that stretch reads TRLDNVCYRM…QKQLRVQEAL (64 aa).

The protein belongs to the universal ribosomal protein uS4 family. Part of the 30S ribosomal subunit. Contacts protein S5. The interaction surface between S4 and S5 is involved in control of translational fidelity.

One of the primary rRNA binding proteins, it binds directly to 16S rRNA where it nucleates assembly of the body of the 30S subunit. Functionally, with S5 and S12 plays an important role in translational accuracy. This Xanthomonas axonopodis pv. citri (strain 306) protein is Small ribosomal subunit protein uS4.